Consider the following 361-residue polypeptide: Phospho-N-acetylmuramoyl-pentapeptide-transferase (361 aa).

Helical transmembrane passes span 28 to 48, 70 to 90, 94 to 114, 129 to 149, 169 to 189, 205 to 225, 237 to 257, 264 to 284, 289 to 309, and 338 to 358; these read LSMF…IKFF, IGTP…GILL, LSNY…LLGA, VSFK…IYGL, LIIN…VGSS, PVIL…NIVF, MGEV…FLWF, IFMG…IGII, IVLA…IIQV, and TVVI…LATL.

This sequence belongs to the glycosyltransferase 4 family. MraY subfamily. Requires Mg(2+) as cofactor.

It is found in the cell inner membrane. It catalyses the reaction UDP-N-acetyl-alpha-D-muramoyl-L-alanyl-gamma-D-glutamyl-meso-2,6-diaminopimeloyl-D-alanyl-D-alanine + di-trans,octa-cis-undecaprenyl phosphate = di-trans,octa-cis-undecaprenyl diphospho-N-acetyl-alpha-D-muramoyl-L-alanyl-D-glutamyl-meso-2,6-diaminopimeloyl-D-alanyl-D-alanine + UMP. Its pathway is cell wall biogenesis; peptidoglycan biosynthesis. Functionally, catalyzes the initial step of the lipid cycle reactions in the biosynthesis of the cell wall peptidoglycan: transfers peptidoglycan precursor phospho-MurNAc-pentapeptide from UDP-MurNAc-pentapeptide onto the lipid carrier undecaprenyl phosphate, yielding undecaprenyl-pyrophosphoryl-MurNAc-pentapeptide, known as lipid I. This Pelagibacter ubique (strain HTCC1062) protein is Phospho-N-acetylmuramoyl-pentapeptide-transferase.